The primary structure comprises 244 residues: Ubiquinone/menaquinone biosynthesis C-methyltransferase UbiE (244 aa).

S-adenosyl-L-methionine contacts are provided by residues Thr70, Asp91, and Asp117–Ala118.

It belongs to the class I-like SAM-binding methyltransferase superfamily. MenG/UbiE family.

The catalysed reaction is a 2-demethylmenaquinol + S-adenosyl-L-methionine = a menaquinol + S-adenosyl-L-homocysteine + H(+). The enzyme catalyses a 2-methoxy-6-(all-trans-polyprenyl)benzene-1,4-diol + S-adenosyl-L-methionine = a 5-methoxy-2-methyl-3-(all-trans-polyprenyl)benzene-1,4-diol + S-adenosyl-L-homocysteine + H(+). The protein operates within quinol/quinone metabolism; menaquinone biosynthesis; menaquinol from 1,4-dihydroxy-2-naphthoate: step 2/2. It functions in the pathway cofactor biosynthesis; ubiquinone biosynthesis. In terms of biological role, methyltransferase required for the conversion of demethylmenaquinol (DMKH2) to menaquinol (MKH2) and the conversion of 2-polyprenyl-6-methoxy-1,4-benzoquinol (DDMQH2) to 2-polyprenyl-3-methyl-6-methoxy-1,4-benzoquinol (DMQH2). The sequence is that of Ubiquinone/menaquinone biosynthesis C-methyltransferase UbiE from Laribacter hongkongensis (strain HLHK9).